Here is an 81-residue protein sequence, read N- to C-terminus: Small ribosomal subunit protein bS20 (81 aa).

It belongs to the bacterial ribosomal protein bS20 family.

In terms of biological role, binds directly to 16S ribosomal RNA. This Mycoplasma mycoides subsp. mycoides SC (strain CCUG 32753 / NCTC 10114 / PG1) protein is Small ribosomal subunit protein bS20.